The following is a 686-amino-acid chain: Probable serine/threonine-protein kinase pdkA (686 aa).

Positions 1-31 are disordered; the sequence is MENIVITNTSGGGGGGVPSSSTDPPNNTTTT. Low complexity predominate over residues 18–31; sequence PSSSTDPPNNTTTT. The region spanning 69–449 is the Protein kinase domain; sequence FIIGKVLGEG…FDNLKAHPFF (381 aa). Residues 79-81 and Lys98 contribute to the ATP site; that span reads SYG. Positions 100 to 144 are PIF-pocket; sequence LEKKQIIKENKIKYVQIEKEIFCKSNHPNIVKLFFTFRSEQCLYY. ATP is bound by residues 147–149 and Asp153; that span reads ELC. Asp192 functions as the Proton acceptor in the catalytic mechanism. Residues Glu196 and Asp210 each contribute to the ATP site. Disordered stretches follow at residues 211–321 and 481–584; these read FGTG…NTNT and LFSP…NNIS. Low complexity predominate over residues 222–257; that stretch reads SSQQQQQQQQQQQQLPTNSSGNLSSLLNNVNNLSVS. Polar residues predominate over residues 258-267; that stretch reads TDLTQQQQNR. Composition is skewed to low complexity over residues 268–279, 288–321, and 503–568; these read TSSVDSASTTDS, TTTTTNNNNNNNNNNNNNNNNTAAGSNTNTNTNT, and NSCN…QRSG. The 90-residue stretch at 593 to 682 folds into the PH domain; that stretch reads VIYQGLVWKR…DSIKSVILSS (90 aa).

The protein belongs to the protein kinase superfamily. AGC Ser/Thr protein kinase family. PDPK1 subfamily.

The enzyme catalyses L-seryl-[protein] + ATP = O-phospho-L-seryl-[protein] + ADP + H(+). It carries out the reaction L-threonyl-[protein] + ATP = O-phospho-L-threonyl-[protein] + ADP + H(+). The protein is Probable serine/threonine-protein kinase pdkA (pdkA) of Dictyostelium discoideum (Social amoeba).